The sequence spans 89 residues: Translation initiation factor IF-1 1 (89 aa).

In terms of domain architecture, S1-like spans 1 to 73 (MSNKEQLIEM…TKGRITFRHL (73 aa)).

It belongs to the IF-1 family. Component of the 30S ribosomal translation pre-initiation complex which assembles on the 30S ribosome in the order IF-2 and IF-3, IF-1 and N-formylmethionyl-tRNA(fMet); mRNA recruitment can occur at any time during PIC assembly.

It localises to the cytoplasm. In terms of biological role, one of the essential components for the initiation of protein synthesis. Stabilizes the binding of IF-2 and IF-3 on the 30S subunit to which N-formylmethionyl-tRNA(fMet) subsequently binds. Helps modulate mRNA selection, yielding the 30S pre-initiation complex (PIC). Upon addition of the 50S ribosomal subunit IF-1, IF-2 and IF-3 are released leaving the mature 70S translation initiation complex. In Acidovorax sp. (strain JS42), this protein is Translation initiation factor IF-1 1.